The following is a 190-amino-acid chain: Holliday junction branch migration complex subunit RuvA (190 aa).

The interval 1 to 63 (MLDFIKGKVI…EESIEIYGFL (63 aa)) is domain I. Positions 64 to 139 (ESSERDLFEE…ILPSLQYEKD (76 aa)) are domain II. Position 139 (D139) is a region of interest, flexible linker. Positions 139–190 (DQKYDDILSALLNLGYKRLEAKEVLDKIYNNEKDEATIIRESLSILAGKDGK) are domain III.

It belongs to the RuvA family. As to quaternary structure, homotetramer. Forms an RuvA(8)-RuvB(12)-Holliday junction (HJ) complex. HJ DNA is sandwiched between 2 RuvA tetramers; dsDNA enters through RuvA and exits via RuvB. An RuvB hexamer assembles on each DNA strand where it exits the tetramer. Each RuvB hexamer is contacted by two RuvA subunits (via domain III) on 2 adjacent RuvB subunits; this complex drives branch migration. In the full resolvosome a probable DNA-RuvA(4)-RuvB(12)-RuvC(2) complex forms which resolves the HJ.

It is found in the cytoplasm. In terms of biological role, the RuvA-RuvB-RuvC complex processes Holliday junction (HJ) DNA during genetic recombination and DNA repair, while the RuvA-RuvB complex plays an important role in the rescue of blocked DNA replication forks via replication fork reversal (RFR). RuvA specifically binds to HJ cruciform DNA, conferring on it an open structure. The RuvB hexamer acts as an ATP-dependent pump, pulling dsDNA into and through the RuvAB complex. HJ branch migration allows RuvC to scan DNA until it finds its consensus sequence, where it cleaves and resolves the cruciform DNA. This chain is Holliday junction branch migration complex subunit RuvA, found in Thermodesulfovibrio yellowstonii (strain ATCC 51303 / DSM 11347 / YP87).